Here is a 382-residue protein sequence, read N- to C-terminus: Glutaminyl-peptide cyclotransferase-like protein (382 aa).

A helical membrane pass occupies residues 35 to 55 (LLPLLLALAVGSAFYTIWSGW). Cysteines 167 and 191 form a disulfide. Zn(2+) is bound at residue Asp-186. The active-site Proton acceptor is Glu-225. Glu-226 contacts Zn(2+). Asp-269 (proton acceptor) is an active-site residue. His-351 provides a ligand contact to Zn(2+).

This sequence belongs to the glutaminyl-peptide cyclotransferase family.

The protein resides in the golgi apparatus membrane. It carries out the reaction N-terminal L-glutaminyl-[peptide] = N-terminal 5-oxo-L-prolyl-[peptide] + NH4(+). Its function is as follows. Responsible for the biosynthesis of pyroglutamyl peptides. This chain is Glutaminyl-peptide cyclotransferase-like protein (QPCTL), found in Macaca fascicularis (Crab-eating macaque).